A 70-amino-acid polypeptide reads, in one-letter code: Eglin C (70 aa).

The protein belongs to the protease inhibitor I13 (potato type I serine protease inhibitor) family.

Inhibits both elastase and cathepsin G. The sequence is that of Eglin C from Hirudo medicinalis (Medicinal leech).